A 502-amino-acid polypeptide reads, in one-letter code: Protein krueppel (502 aa).

Disordered stretches follow at residues 115 to 164 (PPQG…KLSV) and 178 to 202 (DMYHTSGGPISPPSSGSSPNSTHDG). Composition is skewed to low complexity over residues 119-136 (THLHSPPASPHSPLSTPL) and 183-198 (SGGPISPPSSGSSPNS). C2H2-type zinc fingers lie at residues 222–244 (FTCKICSRSFGYKHVLQNHERTH), 250–272 (FECPECHKRFTRDHHLKTHMRLH), 278–300 (YHCSHCDRQFVQVANLRRHLRVH), 306–328 (YTCEICDGKFSDSNQLKSHMLVH), and 334–354 (FECERCHMKFRRRHHLMNHKC). Disordered regions lie at residues 399-427 (NESVDMEKATPEDDGPLDLSEDGASSVDG) and 445-502 (RLPP…HQQH). Positions 410–419 (EDDGPLDLSE) are enriched in acidic residues. S468, S471, and S477 each carry phosphoserine. The segment covering 482–491 (DDIDLYDLDD) has biased composition (acidic residues).

This sequence belongs to the krueppel C2H2-type zinc-finger protein family.

The protein resides in the nucleus. In terms of biological role, krueppel is a gap class segmentation protein. It is involved in the segmentation of the embryo and in the differentiation of the Malpighian tubules. The sequence is that of Protein krueppel (Kr) from Drosophila melanogaster (Fruit fly).